A 396-amino-acid chain; its full sequence is Tryptophan synthase beta chain 1 (396 aa).

The residue at position 86 (Lys86) is an N6-(pyridoxal phosphate)lysine.

It belongs to the TrpB family. Tetramer of two alpha and two beta chains. The cofactor is pyridoxal 5'-phosphate.

It catalyses the reaction (1S,2R)-1-C-(indol-3-yl)glycerol 3-phosphate + L-serine = D-glyceraldehyde 3-phosphate + L-tryptophan + H2O. It functions in the pathway amino-acid biosynthesis; L-tryptophan biosynthesis; L-tryptophan from chorismate: step 5/5. In terms of biological role, the beta subunit is responsible for the synthesis of L-tryptophan from indole and L-serine. The polypeptide is Tryptophan synthase beta chain 1 (trpB1) (Vibrio parahaemolyticus serotype O3:K6 (strain RIMD 2210633)).